The following is a 154-amino-acid chain: Proline dehydrogenase transcriptional activator (154 aa).

The region spanning 5–66 (IDATDRRILH…MLSPIRLGLI (62 aa)) is the HTH asnC-type domain. A DNA-binding region (H-T-H motif) is located at residues 24–43 (VTELARKVGLSKTPVAARIR).

Transcriptional activator of the putA gene in response to proline. In Rhodobacter capsulatus (Rhodopseudomonas capsulata), this protein is Proline dehydrogenase transcriptional activator (putR).